A 297-amino-acid polypeptide reads, in one-letter code: IMPACT family member C14C8.09c (297 aa).

Residues 225-255 are a coiled coil; it reads LRSELQEKNQKDKKKEVNKLEEKMTNAKEPN. Basic and acidic residues-rich tracts occupy residues 228-250 and 280-297; these read ELQE…KMTN and SVDH…EKEE. The interval 228–297 is disordered; that stretch reads ELQEKNQKDK…KIIKDVEKEE (70 aa).

This sequence belongs to the IMPACT family.

The polypeptide is IMPACT family member C14C8.09c (Schizosaccharomyces pombe (strain 972 / ATCC 24843) (Fission yeast)).